Reading from the N-terminus, the 122-residue chain is uncharacterized protein (122 aa).

An N-terminal signal peptide occupies residues 1-28 (MVPGPPESVVRFFLWFCFLLPPTRKASC). Residue asparagine 49 is glycosylated (N-linked (GlcNAc...) asparagine).

It is found in the secreted. This is an uncharacterized protein from Homo sapiens (Human).